Consider the following 122-residue polypeptide: Mating-type protein A1 (122 aa).

A DNA-binding region (homeobox) is located at residues 62–121 (NHKRGCNIDKKTKDMLNKVYEQKQYLTKEEREFVAKKCNLTPLQVRVWFANKRIRNKNTK).

This sequence belongs to the MATA1 family. As to quaternary structure, forms a heterodimer with ALPHA2.

The protein resides in the nucleus. Its function is as follows. Mating type proteins are sequence specific DNA-binding proteins that act as master switches in yeast differentiation by controlling gene expression in a cell type-specific fashion. Transcriptional corepressor that acts in conjunction with ALPHA2 to repress transcription of haploid-specific genes and of MATALPHA1. The chain is Mating-type protein A1 (MATA1) from Nakaseomyces delphensis (Yeast).